We begin with the raw amino-acid sequence, 436 residues long: GTPase Obg (436 aa).

One can recognise an Obg domain in the interval 2–160 (SMFLDTAKIQ…RELLLELKVL (159 aa)). Residues 161–338 (ADVGLVGFPS…LLDATAELLD (178 aa)) enclose the OBG-type G domain. GTP contacts are provided by residues 167–174 (GFPSVGKS), 192–196 (FTTIV), 214–217 (DLPG), 284–287 (NKMD), and 319–321 (SSL). Mg(2+)-binding residues include Ser174 and Thr194. The 79-residue stretch at 358–436 (GFDEEAPAFE…IGKFEFEFVD (79 aa)) folds into the OCT domain.

This sequence belongs to the TRAFAC class OBG-HflX-like GTPase superfamily. OBG GTPase family. Monomer. The cofactor is Mg(2+).

The protein resides in the cytoplasm. Its function is as follows. An essential GTPase which binds GTP, GDP and possibly (p)ppGpp with moderate affinity, with high nucleotide exchange rates and a fairly low GTP hydrolysis rate. Plays a role in control of the cell cycle, stress response, ribosome biogenesis and in those bacteria that undergo differentiation, in morphogenesis control. The chain is GTPase Obg from Streptococcus gordonii (strain Challis / ATCC 35105 / BCRC 15272 / CH1 / DL1 / V288).